Here is a 378-residue protein sequence, read N- to C-terminus: Carbazole 1,9a-dioxygenase, terminal oxygenase component CarAa (378 aa).

Residues 29–135 (WYPVRLASEI…VEEAKGLIFV (107 aa)) form the Rieske domain. [2Fe-2S] cluster contacts are provided by Cys-69, His-71, Cys-90, and His-93.

As to quaternary structure, homotrimer. Carbazole 1,9a-dioxygenase complex consists of a terminal oxygenase component CarAa, a ferredoxin reductase component fdr and a ferredoxin component CarAc. [2Fe-2S] cluster serves as cofactor.

It carries out the reaction 9H-carbazole + NADH + O2 + H(+) = 2'-aminobiphenyl-2,3-diol + NAD(+). The catalysed reaction is 9H-carbazole + NADPH + O2 + H(+) = 2'-aminobiphenyl-2,3-diol + NADP(+). Its function is as follows. Part of the multicomponent carbazole 1,9a-dioxygenase (CARDO), that converts carbazole (CAR) into 2-aminobiphenyl-2,3-diol. Catalyzes the dioxygenation at the angular (C-9a) and adjacent (C-1) positions of carbazole to yield a highly unstable cis-hydrodiol intermediate which is spontaneously converted to 2-aminobiphenyl-2,3-diol. This Sphingomonas sp protein is Carbazole 1,9a-dioxygenase, terminal oxygenase component CarAa (carAa).